A 659-amino-acid polypeptide reads, in one-letter code: Tetratricopeptide repeat protein 30 homolog (659 aa).

TPR repeat units lie at residues 3–36 (SQNM…LNGI), 43–76 (RAGL…VPDV), 143–176 (ATVK…GGFN), 178–210 (HIAY…GIRN), 391–424 (CRSA…RAWI), 450–483 (TWRL…NYDD), and 533–566 (CIVN…GSGA).

It belongs to the TTC30/dfy-1/fleer family.

The protein localises to the cell projection. It is found in the cilium. Its function is as follows. Required for polyglutamylation of axonemal tubulin in sensory cilia. Plays a role in anterograde intraflagellar transport (IFT), the process by which cilia precursors are transported from the base of the cilium to the site of their incorporation at the tip. This chain is Tetratricopeptide repeat protein 30 homolog, found in Aedes aegypti (Yellowfever mosquito).